A 407-amino-acid chain; its full sequence is Substance-P receptor (407 aa).

At 1-31 (MDNVLPVDSDLFPNISTNTSEPNQFVQPAWQ) the chain is on the extracellular side. Asn14 and Asn18 each carry an N-linked (GlcNAc...) asparagine glycan. Residues 32 to 54 (IVLWAAAYTVIVVTSVVGNVVVM) traverse the membrane as a helical segment. The Cytoplasmic portion of the chain corresponds to 55 to 64 (WIILAHKRMR). Residues 65-86 (TVTNYFLVNLAFAEASMAAFNT) form a helical membrane-spanning segment. Topologically, residues 87-106 (VVNFTYAVHNEWYYGLFYCK) are extracellular. Residues Cys105 and Cys180 are joined by a disulfide bond. A helical transmembrane segment spans residues 107-128 (FHNFFPIAAVFASIYSMTAVAF). Over 129 to 148 (DRYMAIIHPLQPRLSATATK) the chain is Cytoplasmic. The helical transmembrane segment at 149–169 (VVICVIWVLALLLAFPQGYYS) threads the bilayer. At 170 to 194 (TTETMPGRVVCMIEWPSHPDKIYEK) the chain is on the extracellular side. The chain crosses the membrane as a helical span at residues 195–219 (VYHICVTVLIYFLPLLVIGYAYTVV). Topologically, residues 220–248 (GITLWASEIPGDSSDRYHEQVSAKRKVVK) are cytoplasmic. Residues 249–270 (MMIVVVCTFAICWLPFHIFFLL) traverse the membrane as a helical segment. Topologically, residues 271 to 283 (PYINPDLYLKKFI) are extracellular. The helical transmembrane segment at 284–308 (QQVYLAIMWLAMSSTMYNPIIYCCL) threads the bilayer. The Cytoplasmic segment spans residues 309 to 407 (NDRFRLGFKH…SSSFYSNMLS (99 aa)). Cys322 carries S-palmitoyl cysteine lipidation. Positions 363-407 (GAHEEDPEEGPKATPSSLDLTSNGSSRSNSKTVTESSSFYSNMLS) are disordered. Residues 376–407 (TPSSLDLTSNGSSRSNSKTVTESSSFYSNMLS) show a composition bias toward polar residues.

It belongs to the G-protein coupled receptor 1 family. Interacts with ARRB1.

It is found in the cell membrane. This is a receptor for the tachykinin neuropeptide substance P. It is probably associated with G proteins that activate a phosphatidylinositol-calcium second messenger system. The rank order of affinity of this receptor to tachykinins is: substance P &gt; substance K &gt; neuromedin-K. The chain is Substance-P receptor (TACR1) from Cavia porcellus (Guinea pig).